We begin with the raw amino-acid sequence, 449 residues long: Serine--tRNA ligase (449 aa).

Position 256–258 (256–258 (TSE)) interacts with L-serine. 287–289 (RAE) is an ATP binding site. Position 310 (Glu310) interacts with L-serine. 374–377 (EISS) provides a ligand contact to ATP. L-serine is bound at residue Ser410.

It belongs to the class-II aminoacyl-tRNA synthetase family. Type-1 seryl-tRNA synthetase subfamily. As to quaternary structure, homodimer. The tRNA molecule binds across the dimer.

The protein localises to the cytoplasm. It carries out the reaction tRNA(Ser) + L-serine + ATP = L-seryl-tRNA(Ser) + AMP + diphosphate + H(+). The catalysed reaction is tRNA(Sec) + L-serine + ATP = L-seryl-tRNA(Sec) + AMP + diphosphate + H(+). It participates in aminoacyl-tRNA biosynthesis; selenocysteinyl-tRNA(Sec) biosynthesis; L-seryl-tRNA(Sec) from L-serine and tRNA(Sec): step 1/1. Catalyzes the attachment of serine to tRNA(Ser). Is also able to aminoacylate tRNA(Sec) with serine, to form the misacylated tRNA L-seryl-tRNA(Sec), which will be further converted into selenocysteinyl-tRNA(Sec). The chain is Serine--tRNA ligase from Xanthomonas oryzae pv. oryzae (strain MAFF 311018).